Consider the following 352-residue polypeptide: Geranylgeranyl transferase type-1 subunit beta (352 aa).

PFTB repeat units follow at residues 135-180 (VNKK…FILD), 187-228 (KESA…SLLG), 236-276 (FKEQ…MMID), and 283-325 (FASI…SFGN). Residues 213-215 (HGG) and 255-258 (RTNK) contribute to the geranylgeranyl diphosphate site. Residues aspartate 261 and cysteine 263 each contribute to the Zn(2+) site. 264–267 (YAFW) serves as a coordination point for geranylgeranyl diphosphate. A Zn(2+)-binding site is contributed by histidine 313.

This sequence belongs to the protein prenyltransferase subunit beta family. As to quaternary structure, heterodimer of an alpha and a beta subunit. Zn(2+) is required as a cofactor. It depends on Mg(2+) as a cofactor.

It carries out the reaction geranylgeranyl diphosphate + L-cysteinyl-[protein] = S-geranylgeranyl-L-cysteinyl-[protein] + diphosphate. In terms of biological role, catalyzes the transfer of a geranyl-geranyl moiety from geranyl-geranyl pyrophosphate to a cysteine at the fourth position from the C-terminus of proteins having the C-terminal sequence Cys-aliphatic-aliphatic-X. The chain is Geranylgeranyl transferase type-1 subunit beta (pggt1b) from Dictyostelium discoideum (Social amoeba).